A 352-amino-acid chain; its full sequence is Fe(3+) ions import ATP-binding protein FbpC (352 aa).

Residues 5–239 (LHIGHLSKSF…PADLDAALFI (235 aa)) form the ABC transporter domain. Position 37-44 (37-44 (GASGCGKT)) interacts with ATP.

It belongs to the ABC transporter superfamily. Fe(3+) ion importer (TC 3.A.1.10) family. In terms of assembly, the complex is composed of two ATP-binding proteins (FbpC), two transmembrane proteins (FbpB) and a solute-binding protein (FbpA).

The protein localises to the cell inner membrane. It carries out the reaction Fe(3+)(out) + ATP + H2O = Fe(3+)(in) + ADP + phosphate + H(+). Its function is as follows. Part of the ABC transporter complex FbpABC involved in Fe(3+) ions import. Responsible for energy coupling to the transport system. The protein is Fe(3+) ions import ATP-binding protein FbpC of Neisseria meningitidis serogroup A / serotype 4A (strain DSM 15465 / Z2491).